The sequence spans 206 residues: BAG family molecular chaperone regulator 1B (206 aa).

The 81-residue stretch at 122-202 (IEAYIDELQQ…QYLSKLDSTK (81 aa)) folds into the BAG domain. The residue at position 144 (Ser144) is a Phosphoserine.

Binds to the ATPase domain of HSP70/HSC chaperones.

Its function is as follows. Inhibits the chaperone activity of HSP70/HSC70 by promoting substrate release. The chain is BAG family molecular chaperone regulator 1B (bag102) from Schizosaccharomyces pombe (strain 972 / ATCC 24843) (Fission yeast).